A 175-amino-acid polypeptide reads, in one-letter code: ATP synthase subunit b (175 aa).

The chain crosses the membrane as a helical span at residues 23-43 (TGITFLVLLFVLGKFAWGPIV).

Belongs to the ATPase B chain family. F-type ATPases have 2 components, F(1) - the catalytic core - and F(0) - the membrane proton channel. F(1) has five subunits: alpha(3), beta(3), gamma(1), delta(1), epsilon(1). F(0) has three main subunits: a(1), b(2) and c(10-14). The alpha and beta chains form an alternating ring which encloses part of the gamma chain. F(1) is attached to F(0) by a central stalk formed by the gamma and epsilon chains, while a peripheral stalk is formed by the delta and b chains.

The protein resides in the cell inner membrane. F(1)F(0) ATP synthase produces ATP from ADP in the presence of a proton or sodium gradient. F-type ATPases consist of two structural domains, F(1) containing the extramembraneous catalytic core and F(0) containing the membrane proton channel, linked together by a central stalk and a peripheral stalk. During catalysis, ATP synthesis in the catalytic domain of F(1) is coupled via a rotary mechanism of the central stalk subunits to proton translocation. In terms of biological role, component of the F(0) channel, it forms part of the peripheral stalk, linking F(1) to F(0). This chain is ATP synthase subunit b, found in Anaeromyxobacter sp. (strain Fw109-5).